The sequence spans 168 residues: RxLR effector protein PITG_12737 (168 aa).

The signal sequence occupies residues 1–20; sequence MRACAILVVAAAAVLTGSTA. A RxLR-dEER motif is present at residues 54 to 77; sequence RRLRKHKTVNTNSEMEYESEAEAR.

The protein belongs to the RxLR effector family.

It localises to the secreted. The protein resides in the host nucleus. Its subcellular location is the host cytoplasm. In terms of biological role, effector that enhances P.infestans colonization of Nicotiana benthamiana leaves. The polypeptide is RxLR effector protein PITG_12737 (Phytophthora infestans (strain T30-4) (Potato late blight agent)).